The primary structure comprises 222 residues: Eukaryotic translation initiation factor 3 subunit K (222 aa).

In terms of domain architecture, PCI spans 46–208 (YDLEANLAVL…KIKTKNITEK (163 aa)).

The protein belongs to the eIF-3 subunit K family. As to quaternary structure, component of the eukaryotic translation initiation factor 3 (eIF-3) complex. The eIF-3 complex interacts with pix.

Its subcellular location is the cytoplasm. In terms of biological role, component of the eukaryotic translation initiation factor 3 (eIF-3) complex, which is involved in protein synthesis of a specialized repertoire of mRNAs and, together with other initiation factors, stimulates binding of mRNA and methionyl-tRNAi to the 40S ribosome. The eIF-3 complex specifically targets and initiates translation of a subset of mRNAs involved in cell proliferation. The polypeptide is Eukaryotic translation initiation factor 3 subunit K (Drosophila yakuba (Fruit fly)).